The sequence spans 122 residues: Probable glycine cleavage system H protein (122 aa).

In terms of domain architecture, Lipoyl-binding spans 23 to 104 (IATVGITDYA…PYGNWLVKMK (82 aa)). Residue K64 is modified to N6-lipoyllysine.

The protein belongs to the GcvH family. As to quaternary structure, the glycine cleavage system is composed of four proteins: P, T, L and H. (R)-lipoate serves as cofactor.

Its function is as follows. The glycine cleavage system catalyzes the degradation of glycine. The H protein shuttles the methylamine group of glycine from the P protein to the T protein. The protein is Probable glycine cleavage system H protein of Thermoplasma volcanium (strain ATCC 51530 / DSM 4299 / JCM 9571 / NBRC 15438 / GSS1).